Reading from the N-terminus, the 597-residue chain is MFS-type transporter FPY5 (597 aa).

Positions 1–55 are disordered; it reads MSETTGLPLKHLQGSPPGTPVNTNNESNEASPDDGCRLPDTVTEAEASSDNHGSV. 2 stretches are compositionally biased toward polar residues: residues 20 to 30 and 46 to 55; these read PVNTNNESNEA and EASSDNHGSV. Asparagine 25 carries N-linked (GlcNAc...) asparagine glycosylation. A glycan (N-linked (GlcNAc...) asparagine) is linked at asparagine 72. The next 9 helical transmembrane spans lie at 94–114, 120–140, 147–167, 183–203, 214–234, 241–261, 286–306, 316–336, and 360–380; these read LSLL…VSIV, FNMA…FLII, IFGC…FSMA, FQGM…PLMV, IMSS…GAIT, WVFY…AFSV, VDFV…FALE, SGAI…FIAW, and FVMG…AALI. Asparagine 390 carries an N-linked (GlcNAc...) asparagine glycan. Helical transmembrane passes span 402 to 422, 424 to 444, 463 to 483, 498 to 518, and 562 to 582; these read LPLL…VSKL, VPPL…VGLY, IMGL…PLVV, IRVL…INHI, and EQMR…VLLV.

It belongs to the major facilitator superfamily. TCR/Tet family.

It localises to the membrane. The protein operates within secondary metabolite biosynthesis. MFS-type transporter; part of the gene cluster that mediates the biosynthesis of the gamma-pyrones fusapyrone (FPY) and deoxyfusapyrone (dFPY). The polypeptide is MFS-type transporter FPY5 (Fusarium mangiferae (Mango malformation disease fungus)).